Reading from the N-terminus, the 507-residue chain is ATP synthase subunit alpha, chloroplastic (507 aa).

Residue 170–177 participates in ATP binding; it reads GDRQTGKT.

This sequence belongs to the ATPase alpha/beta chains family. As to quaternary structure, F-type ATPases have 2 components, CF(1) - the catalytic core - and CF(0) - the membrane proton channel. CF(1) has five subunits: alpha(3), beta(3), gamma(1), delta(1), epsilon(1). CF(0) has four main subunits: a, b, b' and c.

The protein localises to the plastid. Its subcellular location is the chloroplast thylakoid membrane. It carries out the reaction ATP + H2O + 4 H(+)(in) = ADP + phosphate + 5 H(+)(out). In terms of biological role, produces ATP from ADP in the presence of a proton gradient across the membrane. The alpha chain is a regulatory subunit. This Nicotiana tomentosiformis (Tobacco) protein is ATP synthase subunit alpha, chloroplastic.